A 384-amino-acid chain; its full sequence is 23S rRNA (uracil(747)-C(5))-methyltransferase RlmC (384 aa).

Cys-3, Cys-11, Cys-14, and Cys-87 together coordinate [4Fe-4S] cluster. Residues Gln-212, Phe-241, Glu-262, and Asn-309 each coordinate S-adenosyl-L-methionine. Cys-336 serves as the catalytic Nucleophile.

It belongs to the class I-like SAM-binding methyltransferase superfamily. RNA M5U methyltransferase family. RlmC subfamily.

The enzyme catalyses uridine(747) in 23S rRNA + S-adenosyl-L-methionine = 5-methyluridine(747) in 23S rRNA + S-adenosyl-L-homocysteine + H(+). Its function is as follows. Catalyzes the formation of 5-methyl-uridine at position 747 (m5U747) in 23S rRNA. This Shewanella amazonensis (strain ATCC BAA-1098 / SB2B) protein is 23S rRNA (uracil(747)-C(5))-methyltransferase RlmC.